A 206-amino-acid polypeptide reads, in one-letter code: 3-isopropylmalate dehydratase small subunit (206 aa).

It belongs to the LeuD family. LeuD type 1 subfamily. As to quaternary structure, heterodimer of LeuC and LeuD.

It carries out the reaction (2R,3S)-3-isopropylmalate = (2S)-2-isopropylmalate. It participates in amino-acid biosynthesis; L-leucine biosynthesis; L-leucine from 3-methyl-2-oxobutanoate: step 2/4. Its function is as follows. Catalyzes the isomerization between 2-isopropylmalate and 3-isopropylmalate, via the formation of 2-isopropylmaleate. The protein is 3-isopropylmalate dehydratase small subunit of Leptospira borgpetersenii serovar Hardjo-bovis (strain L550).